The primary structure comprises 382 residues: Protein RecA (382 aa).

The segment at 1–20 (MPADVKAAQSSAGDSRPGER) is disordered. An ATP-binding site is contributed by 79–86 (GPESSGKT). Low complexity predominate over residues 360-369 (SAAAKPSAKT). Residues 360-382 (SAAAKPSAKTADTDKKLVADGAA) form a disordered region. Positions 370 to 382 (ADTDKKLVADGAA) are enriched in basic and acidic residues.

The protein belongs to the RecA family.

Its subcellular location is the cytoplasm. In terms of biological role, can catalyze the hydrolysis of ATP in the presence of single-stranded DNA, the ATP-dependent uptake of single-stranded DNA by duplex DNA, and the ATP-dependent hybridization of homologous single-stranded DNAs. It interacts with LexA causing its activation and leading to its autocatalytic cleavage. This chain is Protein RecA, found in Synechococcus sp. (strain CC9311).